The primary structure comprises 86 residues: Exodeoxyribonuclease 7 small subunit (86 aa).

The tract at residues 67-86 (RVSPASGGATEAPAPAERDR) is disordered.

This sequence belongs to the XseB family. In terms of assembly, heterooligomer composed of large and small subunits.

Its subcellular location is the cytoplasm. It carries out the reaction Exonucleolytic cleavage in either 5'- to 3'- or 3'- to 5'-direction to yield nucleoside 5'-phosphates.. Bidirectionally degrades single-stranded DNA into large acid-insoluble oligonucleotides, which are then degraded further into small acid-soluble oligonucleotides. The polypeptide is Exodeoxyribonuclease 7 small subunit (Beutenbergia cavernae (strain ATCC BAA-8 / DSM 12333 / CCUG 43141 / JCM 11478 / NBRC 16432 / NCIMB 13614 / HKI 0122)).